A 268-amino-acid chain; its full sequence is L-cystine-binding protein TcyA (268 aa).

Residues 1-19 form the signal peptide; the sequence is MKKALLALFMVVSIAALAA. The N-palmitoyl cysteine moiety is linked to residue Cys-20. Residue Cys-20 is the site of S-diacylglycerol cysteine attachment.

Belongs to the bacterial solute-binding protein 3 family. As to quaternary structure, the complex is composed of two ATP-binding proteins (TcyC), two transmembrane proteins (TcyB) and a solute-binding protein (TcyA).

The protein localises to the cell membrane. In terms of biological role, part of the ABC transporter complex TcyABC involved in L-cystine import. The chain is L-cystine-binding protein TcyA (tcyA) from Bacillus subtilis (strain 168).